We begin with the raw amino-acid sequence, 210 residues long: Large ribosomal subunit protein bL25 (210 aa).

The segment at 175–210 (IATILPPQQEEEIDSGEQQEAGQPDAAEGRETTPEE) is disordered. Over residues 201–210 (AEGRETTPEE) the composition is skewed to basic and acidic residues.

It belongs to the bacterial ribosomal protein bL25 family. CTC subfamily. Part of the 50S ribosomal subunit; part of the 5S rRNA/L5/L18/L25 subcomplex. Contacts the 5S rRNA. Binds to the 5S rRNA independently of L5 and L18.

Its function is as follows. This is one of the proteins that binds to the 5S RNA in the ribosome where it forms part of the central protuberance. The chain is Large ribosomal subunit protein bL25 from Geobacillus kaustophilus (strain HTA426).